The sequence spans 206 residues: 3-isopropylmalate dehydratase small subunit (206 aa).

The protein belongs to the LeuD family. LeuD type 1 subfamily. Heterodimer of LeuC and LeuD.

The catalysed reaction is (2R,3S)-3-isopropylmalate = (2S)-2-isopropylmalate. Its pathway is amino-acid biosynthesis; L-leucine biosynthesis; L-leucine from 3-methyl-2-oxobutanoate: step 2/4. Catalyzes the isomerization between 2-isopropylmalate and 3-isopropylmalate, via the formation of 2-isopropylmaleate. This is 3-isopropylmalate dehydratase small subunit from Leptospira interrogans serogroup Icterohaemorrhagiae serovar copenhageni (strain Fiocruz L1-130).